We begin with the raw amino-acid sequence, 746 residues long: Steroid receptor seven-up, isoform A (746 aa).

The segment at proline 38–glutamine 191 is disordered. A compositionally biased stretch (low complexity) spans alanine 56 to valine 68. A compositionally biased stretch (polar residues) spans glutamine 83 to glycine 101. A compositionally biased stretch (gly residues) spans glycine 122–proline 141. The span at methionine 158–glycine 170 shows a compositional bias: polar residues. A compositionally biased stretch (low complexity) spans serine 171–glutamine 191. The nuclear receptor DNA-binding region spans asparagine 197–arginine 272. 2 NR C4-type zinc fingers span residues cysteine 200–cysteine 220 and cysteine 236–cysteine 260. Residues tyrosine 307–phenylalanine 556 form the NR LBD domain. The tract at residues glutamine 579–valine 645 is disordered. Positions glycine 592–threonine 605 are enriched in polar residues. Residues glutamine 606–valine 645 show a composition bias toward low complexity.

Belongs to the nuclear hormone receptor family. NR2 subfamily. Expressed in several embryonic tissues; dorsal vessel, oenocyte and fat body. CNS expression is dynamic and confined to temporally restricted subsections of the NB lineage; expressed in many NB and GMCs, but only a small number of neurons.

The protein resides in the nucleus. Its function is as follows. Receptor that is required in photoreceptors R1, R3, R4 and R6 during eye development; generation of the ganglion mother cell-2 (GMC-2) fate in the nb7-3 lineage, coinciding with the transition in the expression of HB to KR in the neuroblasts (NBs). This is Steroid receptor seven-up, isoform A (svp) from Drosophila melanogaster (Fruit fly).